The chain runs to 289 residues: ATP synthase gamma chain (289 aa).

It belongs to the ATPase gamma chain family. F-type ATPases have 2 components, CF(1) - the catalytic core - and CF(0) - the membrane proton channel. CF(1) has five subunits: alpha(3), beta(3), gamma(1), delta(1), epsilon(1). CF(0) has three main subunits: a, b and c.

The protein localises to the cell membrane. Produces ATP from ADP in the presence of a proton gradient across the membrane. The gamma chain is believed to be important in regulating ATPase activity and the flow of protons through the CF(0) complex. The sequence is that of ATP synthase gamma chain from Hamiltonella defensa subsp. Acyrthosiphon pisum (strain 5AT).